A 217-amino-acid chain; its full sequence is Glutathione S-transferase B (217 aa).

Residues 1–87 enclose the GST N-terminal domain; it reads PMTLGYWNIR…YIARKHNLCG (87 aa). Glutathione contacts are provided by residues 6–7, 45–49, 58–59, and 71–72; these read YW, WLNEK, NL, and QS. The GST C-terminal domain occupies 89–207; it reads TEEETIRMDI…KSSRFLPKPL (119 aa). Y115 contacts substrate.

It belongs to the GST superfamily. Mu family. As to quaternary structure, homodimer.

Its subcellular location is the cytoplasm. The enzyme catalyses RX + glutathione = an S-substituted glutathione + a halide anion + H(+). It catalyses the reaction prostaglandin A2 + glutathione = prostaglandin A2-S-(R)-glutathione. It carries out the reaction prostaglandin J2 + glutathione = prostaglandin J2-S-(R)-glutathione. The catalysed reaction is prostaglandin J2 + glutathione = prostaglandin J2-S-(S)-glutathione. The enzyme catalyses prostaglandin A2 + glutathione = prostaglandin A2-S-(S)-glutathione. It catalyses the reaction 11(S)-hydroxy-14(S),15(S)-epoxy-(5Z,8Z,12E)-eicosatrienoate + glutathione = (11S,15S)-dihydroxy-14(R)-S-glutathionyl-(5Z,8Z,12E)-eicosatrienoate. Conjugation of reduced glutathione to a wide number of exogenous and endogenous hydrophobic electrophiles. Involved in the formation of glutathione conjugates of both prostaglandin A2 (PGA2) and prostaglandin J2 (PGJ2). Participates in the formation of novel hepoxilin regioisomers. The polypeptide is Glutathione S-transferase B (GSTM1) (Cavia porcellus (Guinea pig)).